We begin with the raw amino-acid sequence, 1030 residues long: Leucine-rich repeat and coiled-coil domain-containing protein 1 (1030 aa).

6 LRR repeats span residues 7 to 28 (RNRELSLMDKQISSLLEICLNS), 29 to 50 (NLYSINLHCNQISKIEGLRHLC), 51 to 72 (YLQHLDLSSNLITKIEGLDSLA), 73 to 94 (SLQSLNLSCNKLTRVEGLEKLF), 95 to 116 (NLKKLNLSYNSIQDLTGLIPLH), and 121 to 142 (KLSHLYLHSNCINSIDEVLQST). Positions 160–200 (NPVCHALGYREIILENLPQLNSLDGLDRSGDPVTAHEVDSM) constitute an LRRCT domain. The disordered stretch occupies residues 298-401 (KSEQTKLKAK…GQILGKPHAI (104 aa)). Basic and acidic residues predominate over residues 300–311 (EQTKLKAKRDTD). Polar residues-rich tracts occupy residues 338–368 (KTSQTSKQQANQQLKGRTSYSELKQNVSRKQ) and 378–393 (ETSLSSGRTDTDSTGQ). Residues 432–645 (RERRWKAEQV…DLEDEFRAAL (214 aa)) adopt a coiled-coil conformation.

The protein belongs to the LRRCC1 family.

The protein localises to the cytoplasm. The protein resides in the cytoskeleton. It localises to the microtubule organizing center. It is found in the centrosome. Its subcellular location is the centriole. Its function is as follows. Required for the organization of the mitotic spindle. Maintains the structural integrity of centrosomes during mitosis. This is Leucine-rich repeat and coiled-coil domain-containing protein 1 (lrrcc1) from Xenopus laevis (African clawed frog).